A 27-amino-acid polypeptide reads, in one-letter code: GLASFLGKALKAGLKIGAHLLGGAPQQ.

As to expression, expressed by the skin glands.

It localises to the secreted. Its function is as follows. Antimicrobial peptide. This Xenopus ruwenzoriensis (Uganda clawed frog) protein is Caerulein precursor fragment R7.